Reading from the N-terminus, the 906-residue chain is Protein translocase subunit SecA (906 aa).

ATP contacts are provided by residues Gln87, 105 to 109 (GEGKT), and Asp512. Positions 839–896 (LEEQQRQQSEAAPRTYTHATAESQLADEEAAGEEGHTTFVRDEQKIGRNDPCPCGSGK) are disordered. The segment covering 871–886 (EEGHTTFVRDEQKIGR) has biased composition (basic and acidic residues). 4 residues coordinate Zn(2+): Cys890, Cys892, Cys901, and His902.

This sequence belongs to the SecA family. As to quaternary structure, monomer and homodimer. Part of the essential Sec protein translocation apparatus which comprises SecA, SecYEG and auxiliary proteins SecDF-YajC and YidC. It depends on Zn(2+) as a cofactor.

It localises to the cell inner membrane. It is found in the cytoplasm. The enzyme catalyses ATP + H2O + cellular proteinSide 1 = ADP + phosphate + cellular proteinSide 2.. In terms of biological role, part of the Sec protein translocase complex. Interacts with the SecYEG preprotein conducting channel. Has a central role in coupling the hydrolysis of ATP to the transfer of proteins into and across the cell membrane, serving both as a receptor for the preprotein-SecB complex and as an ATP-driven molecular motor driving the stepwise translocation of polypeptide chains across the membrane. In Aeromonas salmonicida (strain A449), this protein is Protein translocase subunit SecA.